The primary structure comprises 402 residues: 4-hydroxy-3-methylbut-2-enyl diphosphate reductase (402 aa).

Cys66 contributes to the [4Fe-4S] cluster binding site. Residue His96 participates in (2E)-4-hydroxy-3-methylbut-2-enyl diphosphate binding. His96 lines the dimethylallyl diphosphate pocket. Residue His96 participates in isopentenyl diphosphate binding. Cys157 is a [4Fe-4S] cluster binding site. Position 185 (His185) interacts with (2E)-4-hydroxy-3-methylbut-2-enyl diphosphate. Position 185 (His185) interacts with dimethylallyl diphosphate. An isopentenyl diphosphate-binding site is contributed by His185. Catalysis depends on Glu187, which acts as the Proton donor. Thr250 is a (2E)-4-hydroxy-3-methylbut-2-enyl diphosphate binding site. A [4Fe-4S] cluster-binding site is contributed by Cys288. The (2E)-4-hydroxy-3-methylbut-2-enyl diphosphate site is built by Ser317, Ser318, Asn319, and Ser379. Dimethylallyl diphosphate is bound by residues Ser317, Ser318, Asn319, and Ser379. Residues Ser317, Ser318, Asn319, and Ser379 each coordinate isopentenyl diphosphate.

It belongs to the IspH family. It depends on [4Fe-4S] cluster as a cofactor.

The catalysed reaction is isopentenyl diphosphate + 2 oxidized [2Fe-2S]-[ferredoxin] + H2O = (2E)-4-hydroxy-3-methylbut-2-enyl diphosphate + 2 reduced [2Fe-2S]-[ferredoxin] + 2 H(+). The enzyme catalyses dimethylallyl diphosphate + 2 oxidized [2Fe-2S]-[ferredoxin] + H2O = (2E)-4-hydroxy-3-methylbut-2-enyl diphosphate + 2 reduced [2Fe-2S]-[ferredoxin] + 2 H(+). Its pathway is isoprenoid biosynthesis; dimethylallyl diphosphate biosynthesis; dimethylallyl diphosphate from (2E)-4-hydroxy-3-methylbutenyl diphosphate: step 1/1. The protein operates within isoprenoid biosynthesis; isopentenyl diphosphate biosynthesis via DXP pathway; isopentenyl diphosphate from 1-deoxy-D-xylulose 5-phosphate: step 6/6. In terms of biological role, catalyzes the conversion of 1-hydroxy-2-methyl-2-(E)-butenyl 4-diphosphate (HMBPP) into a mixture of isopentenyl diphosphate (IPP) and dimethylallyl diphosphate (DMAPP). Acts in the terminal step of the DOXP/MEP pathway for isoprenoid precursor biosynthesis. This is 4-hydroxy-3-methylbut-2-enyl diphosphate reductase from Crocosphaera subtropica (strain ATCC 51142 / BH68) (Cyanothece sp. (strain ATCC 51142)).